A 25-amino-acid chain; its full sequence is Flagellar filament core protein flaB1 (25 aa).

It belongs to the bacterial flagellin family. In terms of assembly, the flagellum consists of an outer layer composed of two sheath proteins, flaA1 (44 kDa) and flaA2 (35 kDa) around a core that contains three proteins flaB1 (37 kDa), flaB2 (34 kDa) and flaB3 (32 kDa).

The protein resides in the periplasmic flagellum. The protein localises to the periplasm. Its function is as follows. Component of the core of the flagella. This Brachyspira hyodysenteriae (Treponema hyodysenteriae) protein is Flagellar filament core protein flaB1 (flaB1).